Consider the following 240-residue polypeptide: UDP-2,3-diacylglucosamine hydrolase (240 aa).

Asp-8, His-10, Asp-41, Asn-79, and His-114 together coordinate Mn(2+). Residue 79-80 (NR) coordinates substrate. Asp-122, Ser-160, Asn-164, Lys-167, and His-195 together coordinate substrate. Residues His-195 and His-197 each contribute to the Mn(2+) site.

Belongs to the LpxH family. Mn(2+) serves as cofactor.

It is found in the cell inner membrane. It catalyses the reaction UDP-2-N,3-O-bis[(3R)-3-hydroxytetradecanoyl]-alpha-D-glucosamine + H2O = 2-N,3-O-bis[(3R)-3-hydroxytetradecanoyl]-alpha-D-glucosaminyl 1-phosphate + UMP + 2 H(+). Its pathway is glycolipid biosynthesis; lipid IV(A) biosynthesis; lipid IV(A) from (3R)-3-hydroxytetradecanoyl-[acyl-carrier-protein] and UDP-N-acetyl-alpha-D-glucosamine: step 4/6. Hydrolyzes the pyrophosphate bond of UDP-2,3-diacylglucosamine to yield 2,3-diacylglucosamine 1-phosphate (lipid X) and UMP by catalyzing the attack of water at the alpha-P atom. Involved in the biosynthesis of lipid A, a phosphorylated glycolipid that anchors the lipopolysaccharide to the outer membrane of the cell. The sequence is that of UDP-2,3-diacylglucosamine hydrolase from Salmonella arizonae (strain ATCC BAA-731 / CDC346-86 / RSK2980).